A 783-amino-acid polypeptide reads, in one-letter code: BMP/retinoic acid-inducible neural-specific protein 2 (783 aa).

The first 33 residues, 1–33 (MRWPCSSRFRGLWPEAAPWAVLLALGVPGWVLA), serve as a signal peptide directing secretion. An MACPF domain is found at 85–281 (RYRIYREFAR…FVAAALSYIT (197 aa)). Residues Asn-185, Asn-354, Asn-473, Asn-579, Asn-626, and Asn-658 are each glycosylated (N-linked (GlcNAc...) asparagine).

The protein belongs to the BRINP family. Expressed in olfactory bulb, cerebellum and neuronal layers in hippocampus.

It is found in the secreted. Functionally, inhibits neuronal cell proliferation by negative regulation of the cell cycle transition. The protein is BMP/retinoic acid-inducible neural-specific protein 2 (Brinp2) of Rattus norvegicus (Rat).